Consider the following 1058-residue polypeptide: SMC5-SMC6 complex localization factor protein 1 (1058 aa).

BRCT domains follow at residues 12–77 (MTGF…IHSA) and 119–196 (GAPG…GDFL). The interval 410 to 1058 (PRGVLNLIES…MMCRSVMEFS (649 aa)) is NSE5-like domain; mediates interaction with SLF2. 3 ANK repeats span residues 806 to 836 (KGETALHRACINNQVEKLILLLSLPGIDINV), 840 to 869 (AGWTPLHEACNYGNTVCVQEILQRCPEVDL), and 874 to 903 (DGVTPLHDALSNGHVEIGKLLLQHGGPVLL). Lysine 931 participates in a covalent cross-link: Glycyl lysine isopeptide (Lys-Gly) (interchain with G-Cter in SUMO2).

As to quaternary structure, interacts (via N-terminus) with SLF2; this interaction links RAD18 to the SMC5-SMC6 complex. Interacts (via BRCT domains) with RAD18; this interaction occurs in a SLF2-independent manner. Interacts with SMC6. Interacts (via BRCT domains) with RAD18 (via C-terminus and phosphorylated form); this interaction is required for efficient repair of UV-induced DNA damage.

It localises to the nucleus. The protein localises to the cytoplasm. The protein resides in the cytoskeleton. It is found in the microtubule organizing center. Its subcellular location is the centrosome. Its function is as follows. Plays a role in the DNA damage response (DDR) pathway by regulating postreplication repair of UV-damaged DNA and genomic stability maintenance. The SLF1-SLF2 complex acts to link RAD18 with the SMC5-SMC6 complex at replication-coupled interstrand cross-links (ICL) and DNA double-strand breaks (DSBs) sites on chromatin during DNA repair in response to stalled replication forks. Promotes the recruitment of SLF2 and the SMC5-SMC6 complex to DNA lesions. This Homo sapiens (Human) protein is SMC5-SMC6 complex localization factor protein 1.